Reading from the N-terminus, the 165-residue chain is Lipoprotein signal peptidase (165 aa).

Helical transmembrane passes span 68–88 and 100–120; these read PLLP…GLFG and GFLL…GEVI. Residues Asp-121 and Asp-137 contribute to the active site. A helical membrane pass occupies residues 130 to 150; it reads FPVFNIADISINVGLACLIFA.

The protein belongs to the peptidase A8 family.

It is found in the cell inner membrane. The enzyme catalyses Release of signal peptides from bacterial membrane prolipoproteins. Hydrolyzes -Xaa-Yaa-Zaa-|-(S,diacylglyceryl)Cys-, in which Xaa is hydrophobic (preferably Leu), and Yaa (Ala or Ser) and Zaa (Gly or Ala) have small, neutral side chains.. It functions in the pathway protein modification; lipoprotein biosynthesis (signal peptide cleavage). This protein specifically catalyzes the removal of signal peptides from prolipoproteins. The chain is Lipoprotein signal peptidase from Acaryochloris marina (strain MBIC 11017).